A 130-amino-acid polypeptide reads, in one-letter code: uncharacterized protein (130 aa).

The protein belongs to the thioester dehydratase family. FabZ subfamily.

This is an uncharacterized protein from Bacillus subtilis (strain 168).